A 452-amino-acid polypeptide reads, in one-letter code: Protein mab-21-like 4 (452 aa).

This Mus musculus (Mouse) protein is Protein mab-21-like 4 (Mab21l4).